The following is a 421-amino-acid chain: UPF0415 protein C7orf25 homolog (421 aa).

The protein belongs to the UPF0415 family.

This Bos taurus (Bovine) protein is UPF0415 protein C7orf25 homolog.